The chain runs to 584 residues: Zinc finger and BTB domain-containing protein 7A (584 aa).

Residues 34–101 (CDVVILVEGR…AYTATLTVST (68 aa)) enclose the BTB domain. The interval 220 to 313 (YGPGPPAERP…EDGDGPDVDG (94 aa)) is disordered. The mediates interaction with KHDRBS1 stretch occupies residues 277–584 (EEEAASLSEA…TDGNFTAGLA (308 aa)). Over residues 281–290 (ASLSEAAPEP) the composition is skewed to low complexity. 2 positions are modified to phosphoserine: serine 337 and serine 341. The mediates interaction with RELA stretch occupies residues 349 to 584 (MDYYLKYFSG…TDGNFTAGLA (236 aa)). Residues 377 to 584 (RAKAFQKCPI…TDGNFTAGLA (208 aa)) form a mediates interaction with SMAD4 region. 2 consecutive C2H2-type zinc fingers follow at residues 382–404 (QKCP…IRTH) and 410–432 (YECN…MRKH). Residue lysine 436 forms a Glycyl lysine isopeptide (Lys-Gly) (interchain with G-Cter in SUMO2) linkage. Residues 438–460 (YLCQQCGAAFAHNYDLKNHMRVH) form a C2H2-type 3 zinc finger. The C2H2-type 4; atypical zinc finger occupies 466-490 (YQCDSCCKTFVRSDHLHRHLKKDGC). Residues 486–584 (KKDGCNGVPS…TDGNFTAGLA (99 aa)) form a disordered region. Positions 505–527 (GGAPDPSPGATATPGAPAQPSSP) are enriched in low complexity. Residues serine 511, serine 525, and serine 526 each carry the phosphoserine modification. Basic and acidic residues predominate over residues 528–540 (DARRNGQEKHFKD). Residue lysine 539 forms a Glycyl lysine isopeptide (Lys-Gly) (interchain with G-Cter in SUMO2) linkage. A Phosphoserine modification is found at serine 549. A compositionally biased stretch (gly residues) spans 560–572 (GAGGGGDSGGGPG).

Homodimer. Interacts with BCL6. Interacts with RELA; involved in the control by RELA of the accessibility of target gene promoters. Interacts with AR (via NR LBD domain); the interaction is direct and androgen-dependent. Interacts with NCOR1. Interacts with NCOR2. Interacts with SMAD4; the interaction is direct and stimulated by TGFB1. Interacts with HDAC1. Interacts with SP1; ZBTB7A prevents the binding to GC-rich motifs in promoters and represses the transcriptional activity of SP1. Interacts with the DNA-dependent protein kinase complex/DNA-PKc. Interacts with KHDRBS1; negatively regulates KHDRBS1 splicing activity. Post-translationally, sumoylated. Undergoes sumoylation with SUMO1 that may regulate its transcriptional activity. In terms of tissue distribution, widely expressed. In normal thymus, expressed in medullary epithelial cells and Hassle's corpuscles (at protein level). In tonsil, expressed in squamous epithelium and germinal center lymphocytes (at protein level). Up-regulated in a subset of lymphomas, as well as in a subset of breast, lung, colon, prostate and bladder carcinomas (at protein level). Expressed in adipose tissues.

The protein localises to the nucleus. In terms of biological role, transcription factor that represses the transcription of a wide range of genes involved in cell proliferation and differentiation. Directly and specifically binds to the consensus sequence 5'-[GA][CA]GACCCCCCCCC-3' and represses transcription both by regulating the organization of chromatin and through the direct recruitment of transcription factors to gene regulatory regions. Negatively regulates SMAD4 transcriptional activity in the TGF-beta signaling pathway through these two mechanisms. That is, recruits the chromatin regulator HDAC1 to the SMAD4-DNA complex and in parallel prevents the recruitment of the transcriptional activators CREBBP and EP300. Collaborates with transcription factors like RELA to modify the accessibility of gene transcription regulatory regions to secondary transcription factors. Also directly interacts with transcription factors like SP1 to prevent their binding to DNA. Functions as an androgen receptor/AR transcriptional corepressor by recruiting NCOR1 and NCOR2 to the androgen response elements/ARE on target genes. Thereby, negatively regulates androgen receptor signaling and androgen-induced cell proliferation. Involved in the switch between fetal and adult globin expression during erythroid cells maturation. Through its interaction with the NuRD complex regulates chromatin at the fetal globin genes to repress their transcription. Specifically represses the transcription of the tumor suppressor ARF isoform from the CDKN2A gene. Efficiently abrogates E2F1-dependent CDKN2A transactivation. Regulates chondrogenesis through the transcriptional repression of specific genes via a mechanism that also requires histone deacetylation. Regulates cell proliferation through the transcriptional regulation of genes involved in glycolysis. Involved in adipogenesis through the regulation of genes involved in adipocyte differentiation. Plays a key role in the differentiation of lymphoid progenitors into B and T lineages. Promotes differentiation towards the B lineage by inhibiting the T-cell instructive Notch signaling pathway through the specific transcriptional repression of Notch downstream target genes. Also regulates osteoclast differentiation. May also play a role, independently of its transcriptional activity, in double-strand break repair via classical non-homologous end joining/cNHEJ. Recruited to double-strand break sites on damage DNA, interacts with the DNA-dependent protein kinase complex and directly regulates its stability and activity in DNA repair. May also modulate the splicing activity of KHDRBS1 toward BCL2L1 in a mechanism which is histone deacetylase-dependent and thereby negatively regulates the pro-apoptotic effect of KHDRBS1. The sequence is that of Zinc finger and BTB domain-containing protein 7A from Homo sapiens (Human).